The primary structure comprises 412 residues: Putative odorant receptor 85d (412 aa).

The Cytoplasmic portion of the chain corresponds to 1 to 56 (MLTKKDTQSAKEQEKLKAIPLHSFLKYANVFYLSIGMMAYDHKYSQKWKEVLLHWT). Residues 57 to 77 (FIAQMVNLNTVLISELIYVFL) form a helical membrane-spanning segment. Residues 78 to 84 (AIGKGSN) are Extracellular-facing. The helical transmembrane segment at 85–105 (FLEATMNLSFIGFVIVGDFKI) threads the bilayer. Topologically, residues 106-152 (WNISRQRKRLTQVVSRLEELHPQGLAQQEPYNIGHHLSGYSRYSKFY) are cytoplasmic. Residues 153–173 (FGMHMVLIWTYNLYWAVYYLV) traverse the membrane as a helical segment. Residues 174-219 (CDFWLGMRQFERMLPYYCWVPWDWSTGYSYYFMYISQNIGGQACLS) lie on the Extracellular side of the membrane. A helical membrane pass occupies residues 220–240 (GQLAADMLMCALVTLVVMHFI). The Cytoplasmic portion of the chain corresponds to 241–282 (RLSAHIESHVAGIGSFQHDLEFLQATVAYHQSLIHLCQDINE). Residues 283–303 (IFGVSLLSNFVSSSFIICFVG) traverse the membrane as a helical segment. Over 304–314 (FQMTIGSKIDN) the chain is Extracellular. The chain crosses the membrane as a helical span at residues 315–335 (LVMLVLFLFCAMVQVFMIATH). At 336-382 (AQRLVDASEQIGQAVYNHDWFRADLRYRKMLILIIKRAQQPSRLKAT) the chain is on the cytoplasmic side. The helical transmembrane segment at 383 to 403 (MFLNISLVTVSDLLQLSYKFF) threads the bilayer. Residues 404–412 (ALLRTMYVN) lie on the Extracellular side of the membrane.

Belongs to the insect chemoreceptor superfamily. Heteromeric odorant receptor channel (TC 1.A.69) family. Or49a subfamily. Interacts with Orco. Complexes exist early in the endomembrane system in olfactory sensory neurons (OSNs), coupling these complexes to the conserved ciliary trafficking pathway. In terms of tissue distribution, expressed in olfactory sensory neurons in the maxillary palp.

The protein resides in the cell membrane. In terms of biological role, odorant receptor which mediates acceptance or avoidance behavior, depending on its substrates. The odorant receptor repertoire encodes a large collection of odor stimuli that vary widely in identity, intensity, and duration. May form a complex with Orco to form odorant-sensing units, providing sensitive and prolonged odorant signaling and calcium permeability. This is Putative odorant receptor 85d (Or85d) from Drosophila melanogaster (Fruit fly).